The sequence spans 598 residues: Serine/threonine-protein kinase PLK1 (598 aa).

The tract at residues 1 to 23 (MAQVAGKKLTVAPEAAKPPGIPG) is disordered. T10 bears the Phosphothreonine; by PKA; in vitro mark. S25 and S26 each carry phosphoserine. The region spanning 44–296 (YLRGRFLGKG…IDDLLNDEFF (253 aa)) is the Protein kinase domain. Residues 50-58 (LGKGGFAKC), K73, and E122 each bind ATP. D167 (proton acceptor) is an active-site residue. Residues 169-172 (KLGN) and D185 each bind ATP. Residues 185–212 (DFGLATKVEYDGERKKTLCGTPNYIAPE) are activation loop. Residue T201 is modified to Phosphothreonine; by PKA. Phosphoserine; by autocatalysis occurs at positions 260 and 326. The D-box that targets the protein for proteasomal degradation in anaphase signature appears at 328–331 (RKPL). The residue at position 340 (S340) is a Phosphoserine; by CDK1. The POLO box 1 domain maps to 404–482 (WISKWVDYSD…LKYFRNYMSE (79 aa)). The tract at residues 487-501 (AGANTTPREGDELAR) is linker. Residues 504–586 (FLRTWFRTRS…ARTMVEKLQS (83 aa)) form the POLO box 2 domain. An important for interaction with phosphorylated proteins region spans residues 532–534 (HTK).

It belongs to the protein kinase superfamily. Ser/Thr protein kinase family. In terms of assembly, interacts with plk1 and kif2a. Interacts with fbxo5. Activated by phosphorylation on Thr-201 during M phase. Phosphorylated by stk10, leading to activation during oocyte maturation. Post-translationally, ubiquitinated by the anaphase promoting complex/cyclosome (APC/C) in anaphase and following DNA damage, leading to its degradation by the proteasome. Protein levels are down-regulated by proteasomal degradation in anaphase.

It localises to the nucleus. Its subcellular location is the cytoplasm. The protein localises to the cytoskeleton. The protein resides in the microtubule organizing center. It is found in the centrosome. It localises to the spindle. Its subcellular location is the midbody. It carries out the reaction L-seryl-[protein] + ATP = O-phospho-L-seryl-[protein] + ADP + H(+). It catalyses the reaction L-threonyl-[protein] + ATP = O-phospho-L-threonyl-[protein] + ADP + H(+). Its activity is regulated as follows. Activated by phosphorylation of Thr-201. In terms of biological role, serine/threonine-protein kinase that performs several important functions throughout M phase of the cell cycle, including the regulation of centrosome maturation and spindle assembly, the removal of cohesins from chromosome arms, the inactivation of anaphase-promoting complex/cyclosome (APC/C) inhibitors, and the regulation of mitotic exit and cytokinesis. Polo-like kinase proteins act by binding and phosphorylating proteins that are already phosphorylated on a specific motif recognized by the POLO box domains. Phosphorylates cdc25, pkmyt1/myt1, stag2/sa2, tpx2. Plays multiple essential roles during mitosis. Phosphorylates the N-terminal domain of cdc25, which leads to cyclin b-cdc2 activation and mitotic entry. Also required for organization of bipolar spindles, and for exit from mitosis. Involved in kinetochore functions and sister chromatid cohesion by phosphorylating stag2/sa2. This Xenopus laevis (African clawed frog) protein is Serine/threonine-protein kinase PLK1 (plk1).